A 342-amino-acid chain; its full sequence is NADH-quinone oxidoreductase subunit H 1 (342 aa).

8 consecutive transmembrane segments (helical) span residues 7–27, 78–98, 120–140, 166–186, 193–213, 245–265, 284–304, and 322–342; these read FLLE…VIAM, ALFI…GAVI, IGVL…MIGG, MGLS…GEIV, WWNI…SFAE, LFAE…FYFG, ILGT…FMWV, and KIMI…ILLF.

The protein belongs to the complex I subunit 1 family. As to quaternary structure, NDH-1 is composed of 14 different subunits. Subunits NuoA, H, J, K, L, M, N constitute the membrane sector of the complex.

The protein resides in the cell inner membrane. It carries out the reaction a quinone + NADH + 5 H(+)(in) = a quinol + NAD(+) + 4 H(+)(out). In terms of biological role, NDH-1 shuttles electrons from NADH, via FMN and iron-sulfur (Fe-S) centers, to quinones in the respiratory chain. The immediate electron acceptor for the enzyme in this species is believed to be ubiquinone. Couples the redox reaction to proton translocation (for every two electrons transferred, four hydrogen ions are translocated across the cytoplasmic membrane), and thus conserves the redox energy in a proton gradient. This subunit may bind ubiquinone. This is NADH-quinone oxidoreductase subunit H 1 from Cytophaga hutchinsonii (strain ATCC 33406 / DSM 1761 / CIP 103989 / NBRC 15051 / NCIMB 9469 / D465).